A 191-amino-acid chain; its full sequence is Protein GrpE (191 aa).

Residues 1–19 (MKDEHNQKHDHLSQKEPES) show a composition bias toward basic and acidic residues. The tract at residues 1–44 (MKDEHNQKHDHLSQKEPESYQKACACKEQQDEEMQEAGEKEGEI) is disordered.

It belongs to the GrpE family. As to quaternary structure, homodimer.

The protein localises to the cytoplasm. Its function is as follows. Participates actively in the response to hyperosmotic and heat shock by preventing the aggregation of stress-denatured proteins, in association with DnaK and GrpE. It is the nucleotide exchange factor for DnaK and may function as a thermosensor. Unfolded proteins bind initially to DnaJ; upon interaction with the DnaJ-bound protein, DnaK hydrolyzes its bound ATP, resulting in the formation of a stable complex. GrpE releases ADP from DnaK; ATP binding to DnaK triggers the release of the substrate protein, thus completing the reaction cycle. Several rounds of ATP-dependent interactions between DnaJ, DnaK and GrpE are required for fully efficient folding. This is Protein GrpE from Helicobacter pylori (strain G27).